The following is a 104-amino-acid chain: Flagellar hook-basal body complex protein FliE (104 aa).

Belongs to the FliE family.

The protein resides in the bacterial flagellum basal body. This is Flagellar hook-basal body complex protein FliE from Escherichia coli (strain SE11).